Reading from the N-terminus, the 276-residue chain is HTH-type transcriptional activator RhaR (276 aa).

An HTH araC/xylS-type domain is found at 174–272 (ESLFSALNQS…SCTPTEYRSR (99 aa)). DNA-binding regions (H-T-H motif) lie at residues 191 to 212 (ADFCRQHQLAVSSVRRIFKQQT) and 239 to 262 (VANIAIRCGYSDSNYFSSVFGKTF).

As to quaternary structure, binds DNA as a dimer.

It localises to the cytoplasm. Functionally, activates expression of the rhaSR operon in response to L-rhamnose. This is HTH-type transcriptional activator RhaR from Mannheimia succiniciproducens (strain KCTC 0769BP / MBEL55E).